Consider the following 1216-residue polypeptide: Apical endosomal glycoprotein (1216 aa).

An N-terminal signal peptide occupies residues 1-22 (MPLSSHLLPALVLFLAGSSGWA). Topologically, residues 23 to 1151 (WVPNHCRSPG…SPGNTAAPGS (1129 aa)) are extracellular. The LDL-receptor class A 1; truncated domain occupies 26–53 (NHCRSPGQAVCNFVCDCRDCSDEAQCGY). The 159-residue stretch at 64 to 222 (FACDFEQDPC…DDLEFWDCGL (159 aa)) folds into the MAM 1 domain. N-linked (GlcNAc...) asparagine glycosylation occurs at asparagine 203. Residues 228–266 (NCPPGHHHCQNKVCVEPQQLCDGEDNCGDLSDENPLTCG) enclose the LDL-receptor class A 2 domain. Cystine bridges form between cysteine 229–cysteine 241, cysteine 236–cysteine 254, and cysteine 248–cysteine 265. Positions 269–425 (IATDFETGLG…DLILSDHCRP (157 aa)) constitute an MAM 2 domain. Residues 280–307 (WNRSEGWSRNHRAGGPERPSWPRRDHSR) are disordered. Residues asparagine 281 and asparagine 339 are each glycosylated (N-linked (GlcNAc...) asparagine). Residues 429 to 455 (VSTLQPLPPGPRAPAPQPLPPSSRLQD) form a disordered region. The span at 434–449 (PLPPGPRAPAPQPLPP) shows a compositional bias: pro residues. The 36-residue stretch at 456–491 (SCKQGHLACGDLCVPPEQLCDFEEQCAGGEDEQACG) folds into the LDL-receptor class A 3 domain. Cystine bridges form between cysteine 457–cysteine 468, cysteine 464–cysteine 481, and cysteine 475–cysteine 490. 4 MAM domains span residues 491 to 644 (GTTD…DCSP), 654 to 809 (VSCN…PCWA), 811 to 969 (NYCS…PCPQ), and 971 to 1138 (GSCD…HCQQ). Asparagine 583 and asparagine 636 each carry an N-linked (GlcNAc...) asparagine glycan. Asparagine 835 carries an N-linked (GlcNAc...) asparagine glycan. Residues 1152-1172 (VPAVVGSALLLLMLLVLLGLG) form a helical membrane-spanning segment. Residues 1173 to 1216 (GRRWLQKKGSCPFQSNTEATAPGFDNILFNADGVTLPASVTSDP) lie on the Cytoplasmic side of the membrane.

It localises to the membrane. In terms of biological role, probably involved in the sorting and selective transport of receptors and ligands across polarized epithelia. The chain is Apical endosomal glycoprotein from Homo sapiens (Human).